Here is an 85-residue protein sequence, read N- to C-terminus: ATP synthase subunit c (85 aa).

2 consecutive transmembrane segments (helical) span residues 10 to 30 (IAVA…FAVL) and 53 to 73 (FIIA…ALLF).

Belongs to the ATPase C chain family. As to quaternary structure, F-type ATPases have 2 components, F(1) - the catalytic core - and F(0) - the membrane proton channel. F(1) has five subunits: alpha(3), beta(3), gamma(1), delta(1), epsilon(1). F(0) has three main subunits: a(1), b(2) and c(10-14). The alpha and beta chains form an alternating ring which encloses part of the gamma chain. F(1) is attached to F(0) by a central stalk formed by the gamma and epsilon chains, while a peripheral stalk is formed by the delta and b chains.

The protein localises to the cell inner membrane. Its function is as follows. F(1)F(0) ATP synthase produces ATP from ADP in the presence of a proton or sodium gradient. F-type ATPases consist of two structural domains, F(1) containing the extramembraneous catalytic core and F(0) containing the membrane proton channel, linked together by a central stalk and a peripheral stalk. During catalysis, ATP synthesis in the catalytic domain of F(1) is coupled via a rotary mechanism of the central stalk subunits to proton translocation. Functionally, key component of the F(0) channel; it plays a direct role in translocation across the membrane. A homomeric c-ring of between 10-14 subunits forms the central stalk rotor element with the F(1) delta and epsilon subunits. The chain is ATP synthase subunit c from Vibrio vulnificus (strain CMCP6).